Consider the following 378-residue polypeptide: MMSIASGPSHAAYTWASQGGGFGNQTVVDKVPPEMLHMVDAHWYQFPPMNPLWHALLGFVIGVLGVISVIGNGMVIYIFTTTKSLRTPSNLLVVNLAISDFLMMLCMSPAMVINCYYETWVLGPLFCELYGLAGSLFGCASIWTMTMIAFDRYNVIVKGLSAKPMTINGALIRILTIWFFTLAWTIAPMFGWNRYVPEGNMTACGTDYLTKDLFSRSYILIYSIFVYFTPLFLIIYSYFFIIQAVAAHEKNMREQAKKMNVASLRSAENQSTSAECKLAKVALMTISLWFMAWTPYLVINYSGIFETTKISPLFTIWGSLFAKANAVYNPIVYGISHPKYRAALFQKFPSLACTTEPTGADTMSTTTTVTEGNEKPAA.

Over 1-53 the chain is Extracellular; it reads MMSIASGPSHAAYTWASQGGGFGNQTVVDKVPPEMLHMVDAHWYQFPPMNPLW. Asparagine 24 is a glycosylation site (N-linked (GlcNAc...) asparagine). A helical transmembrane segment spans residues 54 to 78; that stretch reads HALLGFVIGVLGVISVIGNGMVIYI. Topologically, residues 79 to 90 are cytoplasmic; that stretch reads FTTTKSLRTPSN. A helical transmembrane segment spans residues 91–115; that stretch reads LLVVNLAISDFLMMLCMSPAMVINC. Residues 116 to 130 are Extracellular-facing; that stretch reads YYETWVLGPLFCELY. The cysteines at positions 127 and 204 are disulfide-linked. Residues 131 to 150 traverse the membrane as a helical segment; the sequence is GLAGSLFGCASIWTMTMIAF. Residues 151–169 lie on the Cytoplasmic side of the membrane; sequence DRYNVIVKGLSAKPMTING. Residues 170–193 form a helical membrane-spanning segment; the sequence is ALIRILTIWFFTLAWTIAPMFGWN. Residues 194–217 are Extracellular-facing; it reads RYVPEGNMTACGTDYLTKDLFSRS. Asparagine 200 is a glycosylation site (N-linked (GlcNAc...) asparagine). Residues 218–245 traverse the membrane as a helical segment; the sequence is YILIYSIFVYFTPLFLIIYSYFFIIQAV. Residues 246 to 280 lie on the Cytoplasmic side of the membrane; it reads AAHEKNMREQAKKMNVASLRSAENQSTSAECKLAK. Residues 281-304 traverse the membrane as a helical segment; the sequence is VALMTISLWFMAWTPYLVINYSGI. The Extracellular segment spans residues 305-311; sequence FETTKIS. The chain crosses the membrane as a helical span at residues 312–336; it reads PLFTIWGSLFAKANAVYNPIVYGIS. Lysine 323 carries the post-translational modification N6-(retinylidene)lysine. The Cytoplasmic segment spans residues 337–378; it reads HPKYRAALFQKFPSLACTTEPTGADTMSTTTTVTEGNEKPAA.

Belongs to the G-protein coupled receptor 1 family. Opsin subfamily. Phosphorylated on some or all of the serine and threonine residues present in the C-terminal region.

It localises to the membrane. In terms of biological role, visual pigments are the light-absorbing molecules that mediate vision. They consist of an apoprotein, opsin, covalently linked to cis-retinal. This is Rhodopsin from Camponotus atriceps (Florida carpenter ant).